Reading from the N-terminus, the 183-residue chain is Ferritin heavy chain (183 aa).

Met-1 is modified (N-acetylmethionine). At Thr-2 the chain carries N-acetylthreonine; in Ferritin heavy chain, N-terminally processed. The Ferritin-like diiron domain maps to 11–160 (QNYHQDSEAA…DHVTNLRKMG (150 aa)). 5 residues coordinate Fe cation: Glu-28, Glu-63, His-66, Glu-108, and Gln-142. A phosphoserine mark is found at Ser-179 and Ser-183.

The protein belongs to the ferritin family. Oligomer of 24 subunits. There are two types of subunits: L (light) chain and H (heavy) chain. The major chain can be light or heavy, depending on the species and tissue type. The functional molecule forms a roughly spherical shell with a diameter of 12 nm and contains a central cavity into which the insoluble mineral iron core is deposited. Interacts with NCOA4; NCOA4 promotes targeting of the iron-binding ferritin complex to autolysosomes following starvation or iron depletion.

It localises to the cytoplasm. It is found in the lysosome. The protein localises to the cytoplasmic vesicle. The protein resides in the autophagosome. It carries out the reaction 4 Fe(2+) + O2 + 4 H(+) = 4 Fe(3+) + 2 H2O. Stores iron in a soluble, non-toxic, readily available form. Important for iron homeostasis. Has ferroxidase activity. Iron is taken up in the ferrous form and deposited as ferric hydroxides after oxidation. Also plays a role in delivery of iron to cells. Mediates iron uptake in capsule cells of the developing kidney. Delivery to lysosomes is mediated by the cargo receptor NCOA4 for autophagic degradation and release of iron. The polypeptide is Ferritin heavy chain (FTH1) (Felis catus (Cat)).